The following is a 519-amino-acid chain: Exodeoxyribonuclease 7 large subunit (519 aa).

This sequence belongs to the XseA family. In terms of assembly, heterooligomer composed of large and small subunits.

It is found in the cytoplasm. The enzyme catalyses Exonucleolytic cleavage in either 5'- to 3'- or 3'- to 5'-direction to yield nucleoside 5'-phosphates.. Functionally, bidirectionally degrades single-stranded DNA into large acid-insoluble oligonucleotides, which are then degraded further into small acid-soluble oligonucleotides. The protein is Exodeoxyribonuclease 7 large subunit of Cereibacter sphaeroides (strain ATCC 17025 / ATH 2.4.3) (Rhodobacter sphaeroides).